Reading from the N-terminus, the 324-residue chain is Transcription factor MYB74 (324 aa).

2 consecutive HTH myb-type domains span residues 10–62 (KNGL…TNYL) and 63–117 (RPDI…RKRL). 2 consecutive DNA-binding regions (H-T-H motif) follow at residues 38 to 62 (WRTL…TNYL) and 90 to 113 (WSAI…NTHI).

In terms of tissue distribution, highly expressed in flowers and at lower levels in rosette leaves and cauline leaves. Expressed at low levels in roots, stems and siliques.

It is found in the nucleus. Functionally, probable transcription factor that may function in salt stress response. This Arabidopsis thaliana (Mouse-ear cress) protein is Transcription factor MYB74.